The following is a 440-amino-acid chain: L-seryl-tRNA(Sec) selenium transferase (440 aa).

The residue at position 282 (lysine 282) is an N6-(pyridoxal phosphate)lysine.

This sequence belongs to the SelA family. Pyridoxal 5'-phosphate serves as cofactor.

Its subcellular location is the cytoplasm. The catalysed reaction is L-seryl-tRNA(Sec) + selenophosphate + H(+) = L-selenocysteinyl-tRNA(Sec) + phosphate. The protein operates within aminoacyl-tRNA biosynthesis; selenocysteinyl-tRNA(Sec) biosynthesis; selenocysteinyl-tRNA(Sec) from L-seryl-tRNA(Sec) (bacterial route): step 1/1. In terms of biological role, converts seryl-tRNA(Sec) to selenocysteinyl-tRNA(Sec) required for selenoprotein biosynthesis. In Campylobacter jejuni subsp. jejuni serotype O:2 (strain ATCC 700819 / NCTC 11168), this protein is L-seryl-tRNA(Sec) selenium transferase.